The sequence spans 689 residues: Chloride channel protein ClC-Kb (689 aa).

Residues 1-51 are Cytoplasmic-facing; the sequence is MSRVLVIEQREGEEKTLIQKHIFRPFPNTRRVVIDHLQRLKNFLFRIGDDW. A run of 2 helical transmembrane segments spans residues 52–83 and 92–112; these read YFLF…RWLQ and LRYL…TGFA. Positions 117-128 form an intramembrane region, helical; it reads PHSGGSGIPELK. Ser-122 contributes to the chloride binding site. A run of 2 helical transmembrane segments spans residues 142-161 and 162-181; these read IKNF…AGST and MFLG…AAYL. N-linked (GlcNAc...) asparagine glycosylation occurs at Asn-194. The segment at residues 204–225 is an intramembrane region (helical); that stretch reads AAAAVGVSTVFGAPISGVLFSV. The helical transmembrane segment at 237–256 threads the bilayer; it reads YWRGFFAATCGAFVFRLLAV. Residues Glu-260, Glu-262, Asp-279, and Glu-282 each coordinate Ca(2+). Helical transmembrane passes span 283–311 and 326–343; these read MFFF…LGYV and PMYS…TFPE. The helical intramembrane region spans 350-361; sequence ASRLTMKELLTS. 2 consecutive transmembrane segments (helical) span residues 402-422 and 423-442; these read GTLA…TTLP and MPAG…GRLV. Phe-428 provides a ligand contact to chloride. Positions 466–498 form an intramembrane region, helical; that stretch reads GGYAWQGAPAYSGAVTHSVSTALLAFEATGQIA. Residues 502–522 traverse the membrane as a helical segment; that stretch reads PVILCVLIANAFTQKLQPSFY. Residues 523–689 lie on the Cytoplasmic side of the membrane; that stretch reads DGTIIVKKLP…KAIEDLANPK (167 aa). CBS domains lie at 553–613 and 630–689; these read MNPD…SHER and ACSI…ANPK.

It belongs to the chloride channel (TC 2.A.49) family. Post-translationally, N-glycosylated on a single asparagine, probably Asn-365 or Asn-375. In terms of tissue distribution, expressed in two distinct regions of the kidney; the proximal convoluted tubule and the diluting segment.

The protein resides in the cell membrane. Its function is as follows. Voltage-gated chloride channel. Chloride channels have several functions including the regulation of cell volume, the stabilization of membrane potential, signal transduction and transepithelial transport. This is Chloride channel protein ClC-Kb (clcnkb) from Xenopus laevis (African clawed frog).